The primary structure comprises 694 residues: Cyclic nucleotide-gated channel beta-3 (694 aa).

Residues 1 to 210 (MLKSLTVKFN…SIDSYTDRVY (210 aa)) are Cytoplasmic-facing. Disordered stretches follow at residues 24 to 82 (CPNL…DPEC) and 146 to 177 (ENFP…KEHQ). Composition is skewed to polar residues over residues 26 to 40 (NLSS…QGDN) and 153 to 168 (ASSQ…PKQE). The helical transmembrane segment at 211–234 (LLWLLLVTIAYNWNCWLLPVRLVF) threads the bilayer. Topologically, residues 235–241 (PCQTPDN) are extracellular. The chain crosses the membrane as a helical span at residues 242 to 262 (KNYWIITDIVCDIIYLCDILL). The Cytoplasmic portion of the chain corresponds to 263-291 (IQPRLQFVRGGEIIVDSNELKRNYRSSTK). Residues 292–309 (FRMDVASLLPFEVLYIFF) traverse the membrane as a helical segment. Over 310 to 312 (GVN) the chain is Extracellular. Residues 313–327 (PIFRANRILKYTSFF) traverse the membrane as a helical segment. The Cytoplasmic segment spans residues 328-340 (EFNHHLESIMDKA). An ion conduction pathway region spans residues 340–439 (AYVYRVIRTT…IGQMRDVIGA (100 aa)). The helical transmembrane segment at 341-363 (YVYRVIRTTGYLLFLLHINACVY) threads the bilayer. Topologically, residues 364–385 (YWASDYEGIGSTKWVYNGEGNK) are extracellular. A run of 2 helical transmembrane segments spans residues 386–412 (YLRC…SFEI) and 413–437 (VFQF…RDVI). The segment at 399–402 (TIGG) is selectivity filter. Residues 438–694 (GAATANQNYF…KGKRKTTTQK (257 aa)) are Cytoplasmic-facing. A C-linker region spans residues 442 to 518 (ANQNYFQACM…SIIDKVELFK (77 aa)). The cyclic nucleotide-binding domain stretch occupies residues 522-638 (TQMIYDLLLR…LLMKKAKILL (117 aa)). 3',5'-cyclic GMP is bound by residues Gly583, Glu584, Arg596, and Thr597.

The protein belongs to the cyclic nucleotide-gated cation channel (TC 1.A.1.5) family. CNGB3 subfamily. As to quaternary structure, forms heterotetrameric channels composed of CNGA3 and CNGB3 subunits with 3:1 stoichiometry. As to expression, small subset of retinal photoreceptor cells and testis.

It localises to the cell membrane. The enzyme catalyses Ca(2+)(in) = Ca(2+)(out). It catalyses the reaction Na(+)(in) = Na(+)(out). The catalysed reaction is K(+)(in) = K(+)(out). It carries out the reaction NH4(+)(in) = NH4(+)(out). The enzyme catalyses Rb(+)(in) = Rb(+)(out). It catalyses the reaction Li(+)(in) = Li(+)(out). The catalysed reaction is Cs(+)(in) = Cs(+)(out). Pore-forming subunit of the cone cyclic nucleotide-gated channel. Mediates cone photoresponses at bright light converting transient changes in intracellular cGMP levels into electrical signals. In the dark, cGMP levels are high and keep the channel open enabling a steady inward current carried by Na(+) and Ca(2+) ions that leads to membrane depolarization and neurotransmitter release from synaptic terminals. Upon photon absorption cGMP levels decline leading to channel closure and membrane hyperpolarization that ultimately slows neurotransmitter release and signals the presence of light, the end point of the phototransduction cascade. Conducts cGMP- and cAMP-gated ion currents, with permeability for monovalent and divalent cations. The polypeptide is Cyclic nucleotide-gated channel beta-3 (Mus musculus (Mouse)).